Consider the following 151-residue polypeptide: uncharacterized protein (151 aa).

This is an uncharacterized protein from Aquifex aeolicus (strain VF5).